A 385-amino-acid polypeptide reads, in one-letter code: Carbamoyl phosphate synthase small chain (385 aa).

Residues Met-1–Gln-185 form a CPSase region. 3 residues coordinate L-glutamine: Ser-47, Gly-237, and Gly-239. The region spanning Asn-189–Ser-376 is the Glutamine amidotransferase type-1 domain. The Nucleophile role is filled by Cys-265. Residues Leu-266, Gln-269, Asn-307, Gly-309, and Phe-310 each coordinate L-glutamine. Catalysis depends on residues His-349 and Glu-351.

Belongs to the CarA family. In terms of assembly, composed of two chains; the small (or glutamine) chain promotes the hydrolysis of glutamine to ammonia, which is used by the large (or ammonia) chain to synthesize carbamoyl phosphate. Tetramer of heterodimers (alpha,beta)4.

The catalysed reaction is hydrogencarbonate + L-glutamine + 2 ATP + H2O = carbamoyl phosphate + L-glutamate + 2 ADP + phosphate + 2 H(+). It catalyses the reaction L-glutamine + H2O = L-glutamate + NH4(+). It participates in amino-acid biosynthesis; L-arginine biosynthesis; carbamoyl phosphate from bicarbonate: step 1/1. It functions in the pathway pyrimidine metabolism; UMP biosynthesis via de novo pathway; (S)-dihydroorotate from bicarbonate: step 1/3. In terms of biological role, small subunit of the glutamine-dependent carbamoyl phosphate synthetase (CPSase). CPSase catalyzes the formation of carbamoyl phosphate from the ammonia moiety of glutamine, carbonate, and phosphate donated by ATP, constituting the first step of 2 biosynthetic pathways, one leading to arginine and/or urea and the other to pyrimidine nucleotides. The small subunit (glutamine amidotransferase) binds and cleaves glutamine to supply the large subunit with the substrate ammonia. This is Carbamoyl phosphate synthase small chain from Pasteurella multocida (strain Pm70).